A 671-amino-acid chain; its full sequence is Sodium, potassium, lithium and rubidium/H(+) antiporter (671 aa).

11 consecutive transmembrane segments (helical) span residues 7–29, 46–66, 83–103, 110–130, 156–176, 182–202, 228–248, 276–296, 315–335, 364–384, and 389–409; these read VLVL…FIPV, GLHI…PLLF, PILL…GYTI, IPLP…VVAV, ASGL…AFSI, SFVL…FFII, FVIY…VVAG, IILF…IPDV, ILII…LFWA, GAVT…GSPF, and LIIF…SVLL.

The protein belongs to the monovalent cation:proton antiporter 1 (CPA1) transporter (TC 2.A.36) family. Nhak (TC 2.A.36.3.2) subfamily.

It is found in the cell membrane. Transporter involved in the efflux of sodium, potassium, lithium and rubidium. The sequence is that of Sodium, potassium, lithium and rubidium/H(+) antiporter (nhaK) from Bacillus pumilus (strain SAFR-032).